Here is a 160-residue protein sequence, read N- to C-terminus: Ribosomal RNA large subunit methyltransferase H (160 aa).

Residues leucine 76 and glycine 108 each coordinate S-adenosyl-L-methionine.

Belongs to the RNA methyltransferase RlmH family. As to quaternary structure, homodimer.

The protein localises to the cytoplasm. It catalyses the reaction pseudouridine(1915) in 23S rRNA + S-adenosyl-L-methionine = N(3)-methylpseudouridine(1915) in 23S rRNA + S-adenosyl-L-homocysteine + H(+). Specifically methylates the pseudouridine at position 1915 (m3Psi1915) in 23S rRNA. This chain is Ribosomal RNA large subunit methyltransferase H, found in Nitrobacter winogradskyi (strain ATCC 25391 / DSM 10237 / CIP 104748 / NCIMB 11846 / Nb-255).